The chain runs to 180 residues: DNA replication regulator protein HobA (180 aa).

The Ca(2+) site is built by glutamate 17, glutamate 27, glutamate 140, glutamate 143, and asparagine 176.

In terms of assembly, forms dimers and homotetramers. Interacts with domains I and II (residues 1-112) of DnaA. In a crystal with domains I and II of DnaA HobA forms tetramers with DnaA fragments bound at the dimer interface of the tetramer. Requires Ca(2+) as cofactor.

Functionally, required for DNA replication initiation. Increases binding of DnaA to oriC region. The sequence is that of DNA replication regulator protein HobA from Helicobacter pylori (strain ATCC 700392 / 26695) (Campylobacter pylori).